A 104-amino-acid chain; its full sequence is MSTQFDQVSVIKKANIYFDGKCVSHSVLFADGTKKTIGVIFPSTLKFNTGAAEIMELNAGKCRIRLAGATDWETYEGGQQFNVPANSSFDIETIDTLDYVCHFV.

The protein belongs to the nucleoside phosphorylase PpnP family.

The enzyme catalyses a purine D-ribonucleoside + phosphate = a purine nucleobase + alpha-D-ribose 1-phosphate. It carries out the reaction adenosine + phosphate = alpha-D-ribose 1-phosphate + adenine. The catalysed reaction is cytidine + phosphate = cytosine + alpha-D-ribose 1-phosphate. It catalyses the reaction guanosine + phosphate = alpha-D-ribose 1-phosphate + guanine. The enzyme catalyses inosine + phosphate = alpha-D-ribose 1-phosphate + hypoxanthine. It carries out the reaction thymidine + phosphate = 2-deoxy-alpha-D-ribose 1-phosphate + thymine. The catalysed reaction is uridine + phosphate = alpha-D-ribose 1-phosphate + uracil. It catalyses the reaction xanthosine + phosphate = alpha-D-ribose 1-phosphate + xanthine. Catalyzes the phosphorolysis of diverse nucleosides, yielding D-ribose 1-phosphate and the respective free bases. Can use uridine, adenosine, guanosine, cytidine, thymidine, inosine and xanthosine as substrates. Also catalyzes the reverse reactions. This Janthinobacterium sp. (strain Marseille) (Minibacterium massiliensis) protein is Pyrimidine/purine nucleoside phosphorylase.